A 347-amino-acid polypeptide reads, in one-letter code: Succinylglutamate desuccinylase (347 aa).

His-64, Glu-67, and His-159 together coordinate Zn(2+). Residue Glu-222 is part of the active site.

It belongs to the AspA/AstE family. Succinylglutamate desuccinylase subfamily. It depends on Zn(2+) as a cofactor.

It carries out the reaction N-succinyl-L-glutamate + H2O = L-glutamate + succinate. The protein operates within amino-acid degradation; L-arginine degradation via AST pathway; L-glutamate and succinate from L-arginine: step 5/5. Functionally, transforms N(2)-succinylglutamate into succinate and glutamate. The chain is Succinylglutamate desuccinylase from Burkholderia cenocepacia (strain ATCC BAA-245 / DSM 16553 / LMG 16656 / NCTC 13227 / J2315 / CF5610) (Burkholderia cepacia (strain J2315)).